Consider the following 1028-residue polypeptide: Contactin-3 (1028 aa).

A signal peptide spans 1–19 (MMLSWKQLILLSFIGCLAG). 6 Ig-like C2-type domains span residues 32–117 (PSNS…AKLQ), 122–209 (ENFK…RVLG), 227–313 (PKIE…GRLT), 318–402 (PYWL…AELK), 408–497 (PDFS…LVVT), and 499–593 (PTRI…AELI). Disulfide bonds link C50/C100, C144/C196, C249/C297, C339/C386, and C431/C479. Residues N65 and N193 are each glycosylated (N-linked (GlcNAc...) asparagine). N-linked (GlcNAc...) asparagine glycosylation is found at N377, N468, and N489. Residues C521 and C577 are joined by a disulfide bond. 4 consecutive Fibronectin type-III domains span residues 600–698 (PPEN…TEEA), 703–800 (APSE…SAEE), 805–901 (APSH…TKKT), and 902–998 (PPSQ…TSMD). The tract at residues 684–714 (GEPSLPSEKVRTEEAAPEIAPSEVSGGGGSR) is disordered. N765, N860, N895, N913, N931, and N956 each carry an N-linked (GlcNAc...) asparagine glycan. S1002 carries the GPI-anchor amidated serine lipid modification. Positions 1003–1028 (TSAISNIHPLSGYMSVLLFFIVNALW) are cleaved as a propeptide — removed in mature form.

The protein belongs to the immunoglobulin superfamily. Contactin family. In terms of assembly, interacts with PTPRG. Specifically expressed in brain. Ectopically expressed in tumors expressing endogenous intracisternal A-type particles (IAPs).

The protein localises to the cell membrane. Contactins mediate cell surface interactions during nervous system development. Has some neurite outgrowth-promoting activity. The protein is Contactin-3 (Cntn3) of Mus musculus (Mouse).